The sequence spans 550 residues: Arginine--tRNA ligase (550 aa).

Residues A130–G140 carry the 'HIGH' region motif.

Belongs to the class-I aminoacyl-tRNA synthetase family. In terms of assembly, monomer.

The protein resides in the cytoplasm. The catalysed reaction is tRNA(Arg) + L-arginine + ATP = L-arginyl-tRNA(Arg) + AMP + diphosphate. This is Arginine--tRNA ligase from Corynebacterium diphtheriae (strain ATCC 700971 / NCTC 13129 / Biotype gravis).